Here is a 1286-residue protein sequence, read N- to C-terminus: 5-oxoprolinase (1286 aa).

Phosphoserine occurs at positions 930 and 1077.

This sequence belongs to the oxoprolinase family. Homodimer.

The protein resides in the cytoplasm. It carries out the reaction 5-oxo-L-proline + ATP + 2 H2O = L-glutamate + ADP + phosphate + H(+). Catalyzes the cleavage of 5-oxo-L-proline to form L-glutamate coupled to the hydrolysis of ATP to ADP and inorganic phosphate. The polypeptide is 5-oxoprolinase (OXP1) (Saccharomyces cerevisiae (strain ATCC 204508 / S288c) (Baker's yeast)).